Consider the following 394-residue polypeptide: [Pyruvate dehydrogenase (acetyl-transferring)] kinase 1, mitochondrial (394 aa).

Residues 1–20 constitute a mitochondrion transit peptide; sequence MWKIMRSWKCGGMRWAHRQR. Residues 126–386 form the Histidine kinase domain; it reads AYPYELHNPP…DVYIKLKGPS (261 aa). Residue His-148 is modified to Phosphohistidine; by autocatalysis. Residues 267 to 274, Asp-304, 323 to 324, and 347 to 352 contribute to the ATP site; these read EVFKNAFE, ST, and GMGFGL.

Belongs to the PDK/BCKDK protein kinase family. Interacts with PKP2.

It localises to the mitochondrion matrix. It carries out the reaction L-seryl-[pyruvate dehydrogenase E1 alpha subunit] + ATP = O-phospho-L-seryl-[pyruvate dehydrogenase E1 alpha subunit] + ADP + H(+). In terms of biological role, inhibits the mitochondrial pyruvate dehydrogenase complex by phosphorylation of the E1 alpha subunit (PDA1), thus contributing to the regulation of glucose metabolism. Also involved in telomere maintenance. The chain is [Pyruvate dehydrogenase (acetyl-transferring)] kinase 1, mitochondrial from Saccharomyces cerevisiae (strain ATCC 204508 / S288c) (Baker's yeast).